The chain runs to 606 residues: Endo-beta-1,4-xylanase Xyn10C (606 aa).

Residues 1 to 19 (MKKIQQLLMLSLISSTLIA) form the signal peptide. Residue C20 is the site of N-palmitoyl cysteine attachment. Residue C20 is the site of S-diacylglycerol cysteine attachment. The tract at residues 23 to 64 (GGGGGSTPTTSSSPQSSSPASTPSSASSSSIISSSSLSSSLS) is disordered. The segment covering 29 to 64 (TPTTSSSPQSSSPASTPSSASSSSIISSSSLSSSLS) has biased composition (low complexity). The 152-residue stretch at 91–242 (GNVVIEVDMA…KSVTITLAQE (152 aa)) folds into the CBM15 domain. Positions 106 and 171 each coordinate a carbohydrate. Residues C183 and C200 are joined by a disulfide bond. A carbohydrate is bound at residue Q217. The GH10 domain occupies 245-596 (SANVDHLRDL…KPALRGFADA (352 aa)). Substrate contacts are provided by residues 296–299 (NIMK), H332, and N384. The active-site Proton donor is E385. Catalysis depends on E497, which acts as the Nucleophile. Residue W552 participates in substrate binding.

It belongs to the glycosyl hydrolase 10 (cellulase F) family.

Its subcellular location is the cell outer membrane. It carries out the reaction Endohydrolysis of (1-&gt;4)-beta-D-xylosidic linkages in xylans.. It participates in glycan degradation; xylan degradation. Endo-acting xylanase which specifically cleaves internal linkages on the xylan backbone, releasing xylooligosaccharides. Is able to hydrolyze oat spelt xylan, the arabinoxylans from wheat and rye, and glucuronoxylan. Also displays very low activity against xylooligosaccharides. During the xylan degradation process, Xyn10C may act on the soluble xylans and long xylooligosaccharides products released by the secreted xylanases Xyn11A, Xyn11B and Xyn10A. In Cellvibrio japonicus (Pseudomonas fluorescens subsp. cellulosa), this protein is Endo-beta-1,4-xylanase Xyn10C (xyn10C).